Here is a 234-residue protein sequence, read N- to C-terminus: uncharacterized protein (234 aa).

Disordered stretches follow at residues 1-65 (MTSV…RRGP) and 182-234 (ARGA…GRKT).

This is an uncharacterized protein from Homo sapiens (Human).